Consider the following 148-residue polypeptide: MRMSTSTEVIAHHWAFAIFLIIAIGLCCLMLVGGWYLGGRARARSKNTPFESGIDSVGSARLRLSAKFYLVAMFFVIFDVEALYLYAWSTSIRESGWVGFVEAAIFILVLLAGLVYLVRIGALDWTPARSRRTLVNPETDSPTNRHMQ.

Transmembrane regions (helical) follow at residues 14-34 (WAFA…LVGG), 68-88 (FYLV…LYAW), and 98-118 (VGFV…VYLV).

It belongs to the complex I subunit 3 family. NDH-1 is composed of 13 different subunits. Subunits NuoA, H, J, K, L, M, N constitute the membrane sector of the complex.

It is found in the cell inner membrane. The catalysed reaction is a quinone + NADH + 5 H(+)(in) = a quinol + NAD(+) + 4 H(+)(out). In terms of biological role, NDH-1 shuttles electrons from NADH, via FMN and iron-sulfur (Fe-S) centers, to quinones in the respiratory chain. The immediate electron acceptor for the enzyme in this species is believed to be ubiquinone. Couples the redox reaction to proton translocation (for every two electrons transferred, four hydrogen ions are translocated across the cytoplasmic membrane), and thus conserves the redox energy in a proton gradient. This is NADH-quinone oxidoreductase subunit A from Klebsiella pneumoniae subsp. pneumoniae (strain ATCC 700721 / MGH 78578).